A 379-amino-acid chain; its full sequence is Epoxyqueuosine reductase (379 aa).

Asp140 acts as the Proton donor in catalysis. The 4Fe-4S ferredoxin-type domain maps to 184–214 (FEPDTPASDLCGSCNQCVKACPTGSLLGEGK). Residues Cys194, Cys197, Cys200, Cys204, Cys220, Cys246, Cys249, and Cys253 each coordinate [4Fe-4S] cluster. An HEAT-like PBS-type repeat occupies 307–332 (QRNAIIILARYKDKTAVPDLIDCLQN).

It belongs to the QueG family. Monomer. Cob(II)alamin is required as a cofactor. It depends on [4Fe-4S] cluster as a cofactor.

Its subcellular location is the cytoplasm. It catalyses the reaction epoxyqueuosine(34) in tRNA + AH2 = queuosine(34) in tRNA + A + H2O. Its pathway is tRNA modification; tRNA-queuosine biosynthesis. Functionally, catalyzes the conversion of epoxyqueuosine (oQ) to queuosine (Q), which is a hypermodified base found in the wobble positions of tRNA(Asp), tRNA(Asn), tRNA(His) and tRNA(Tyr). The sequence is that of Epoxyqueuosine reductase from Listeria monocytogenes serovar 1/2a (strain ATCC BAA-679 / EGD-e).